Here is a 319-residue protein sequence, read N- to C-terminus: MATH domain and coiled-coil domain-containing protein At3g58200 (319 aa).

In terms of domain architecture, MATH spans aspartate 6–valine 132. Residues phenylalanine 255 to lysine 302 are a coiled coil.

This chain is MATH domain and coiled-coil domain-containing protein At3g58200, found in Arabidopsis thaliana (Mouse-ear cress).